We begin with the raw amino-acid sequence, 327 residues long: Lipoyl synthase (327 aa).

Residues C72, C77, C83, C98, C102, C105, and S313 each coordinate [4Fe-4S] cluster. The Radical SAM core domain maps to 83–302 (CWSHGTATIM…RKVGLEKGFL (220 aa)).

The protein belongs to the radical SAM superfamily. Lipoyl synthase family. [4Fe-4S] cluster serves as cofactor.

It is found in the cytoplasm. The catalysed reaction is [[Fe-S] cluster scaffold protein carrying a second [4Fe-4S](2+) cluster] + N(6)-octanoyl-L-lysyl-[protein] + 2 oxidized [2Fe-2S]-[ferredoxin] + 2 S-adenosyl-L-methionine + 4 H(+) = [[Fe-S] cluster scaffold protein] + N(6)-[(R)-dihydrolipoyl]-L-lysyl-[protein] + 4 Fe(3+) + 2 hydrogen sulfide + 2 5'-deoxyadenosine + 2 L-methionine + 2 reduced [2Fe-2S]-[ferredoxin]. It functions in the pathway protein modification; protein lipoylation via endogenous pathway; protein N(6)-(lipoyl)lysine from octanoyl-[acyl-carrier-protein]: step 2/2. Its function is as follows. Catalyzes the radical-mediated insertion of two sulfur atoms into the C-6 and C-8 positions of the octanoyl moiety bound to the lipoyl domains of lipoate-dependent enzymes, thereby converting the octanoylated domains into lipoylated derivatives. This chain is Lipoyl synthase, found in Francisella tularensis subsp. novicida (strain U112).